A 286-amino-acid polypeptide reads, in one-letter code: tRNA (guanine-N(7)-)-methyltransferase (286 aa).

2 positions are modified to phosphoserine: serine 7 and serine 59. S-adenosyl-L-methionine contacts are provided by residues glycine 103, glutamate 126–isoleucine 127, asparagine 161–alanine 162, and cysteine 181. Residue aspartate 184 is part of the active site. An S-adenosyl-L-methionine-binding site is contributed by threonine 259–glutamate 261.

It belongs to the class I-like SAM-binding methyltransferase superfamily. TrmB family. In terms of assembly, forms a complex with TRM82.

The protein localises to the nucleus. The enzyme catalyses guanosine(46) in tRNA + S-adenosyl-L-methionine = N(7)-methylguanosine(46) in tRNA + S-adenosyl-L-homocysteine. It functions in the pathway tRNA modification; N(7)-methylguanine-tRNA biosynthesis. In terms of biological role, methyltransferase that catalyzes the formation of N(7)-methylguanine at position 46 (m7G46) in tRNA, a modification required to maintain stability of tRNAs; its absence resulting in tRNA decay. Both the D-stem and T-stem structures of tRNAs are required for efficient methyltransferase activity. The polypeptide is tRNA (guanine-N(7)-)-methyltransferase (Saccharomyces cerevisiae (strain RM11-1a) (Baker's yeast)).